Here is a 328-residue protein sequence, read N- to C-terminus: MSHLALQPGFDFQQAGKEVLEIEREGLAELDQYINQHFTLACEKMFNCTGKVVVMGMGKSGHIGRKMAATFASTGTSSFFVHPGEAAHGDLGMVTPQDVVIAISNSGESSEIAALIPVLKRLHVPLICITGRPESSMARAADVHLCVKVPKEACPLGLAPTSSTTATLVMGDALAVALLKARGFTAEDFALSHPGGALGRKLLLRVSDIMHTGDEIPHVNKHATLRDALLEITRKNLGMTVICDESMKIDGIFTDGDLRRMFDMGGDMRQLGIAEVMTPGGIRVRPGILAVDALNLMQSRHITSVLVADGDQLLGVLHMHDLLRAGVV.

One can recognise an SIS domain in the interval 41–184; sequence ACEKMFNCTG…AVALLKARGF (144 aa). Substrate contacts are provided by residues 75 to 76, His82, His88, 114 to 123, and 148 to 150; these read GT, ALIPVLKRLH, and KVP. His82 contacts Zn(2+). Residues 210–268 form the CBS 1 domain; sequence MHTGDEIPHVNKHATLRDALLEITRKNLGMTVICDESMKIDGIFTDGDLRRMFDMGGDM. Substrate is bound at residue Glu275. The CBS 2 domain occupies 277 to 328; it reads MTPGGIRVRPGILAVDALNLMQSRHITSVLVADGDQLLGVLHMHDLLRAGVV.

The protein belongs to the SIS family. GutQ/KpsF subfamily. As to quaternary structure, homotetramer.

It carries out the reaction D-arabinose 5-phosphate = D-ribulose 5-phosphate. Its pathway is carbohydrate biosynthesis; 3-deoxy-D-manno-octulosonate biosynthesis; 3-deoxy-D-manno-octulosonate from D-ribulose 5-phosphate: step 1/3. It participates in bacterial outer membrane biogenesis; lipopolysaccharide biosynthesis. Functionally, involved in the biosynthesis of 3-deoxy-D-manno-octulosonate (KDO), a unique 8-carbon sugar component of lipopolysaccharides (LPSs). Catalyzes the reversible aldol-ketol isomerization between D-ribulose 5-phosphate (Ru5P) and D-arabinose 5-phosphate (A5P). The polypeptide is Arabinose 5-phosphate isomerase KdsD (kdsD) (Salmonella typhi).